We begin with the raw amino-acid sequence, 559 residues long: Apolipoprotein N-acyltransferase 2 (559 aa).

Helical transmembrane passes span 27 to 47, 53 to 73, 86 to 106, 114 to 134, 153 to 173, and 187 to 207; these read LAGS…GFLL, HVAC…SFWL, ASTV…ACIL, ACAF…GILA, IADI…NACV, and VPVF…SLYG. The region spanning 221–507 is the CN hydrolase domain; that stretch reads LALAIVQQNA…SAVLHVPVYP (287 aa). The Proton acceptor role is filled by E288. The active site involves K358. C416 (nucleophile) is an active-site residue. Residues 519-539 form a helical membrane-spanning segment; that stretch reads WVIVLCALIFFAEGVRMAVHT.

It belongs to the CN hydrolase family. Apolipoprotein N-acyltransferase subfamily.

It localises to the cell inner membrane. It catalyses the reaction N-terminal S-1,2-diacyl-sn-glyceryl-L-cysteinyl-[lipoprotein] + a glycerophospholipid = N-acyl-S-1,2-diacyl-sn-glyceryl-L-cysteinyl-[lipoprotein] + a 2-acyl-sn-glycero-3-phospholipid + H(+). The protein operates within protein modification; lipoprotein biosynthesis (N-acyl transfer). Catalyzes the phospholipid dependent N-acylation of the N-terminal cysteine of apolipoprotein, the last step in lipoprotein maturation. This Treponema pallidum (strain Nichols) protein is Apolipoprotein N-acyltransferase 2.